The sequence spans 969 residues: RNA polymerase-associated protein RapA (969 aa).

One can recognise a Helicase ATP-binding domain in the interval glutamate 162–aspartate 339. Aspartate 175–threonine 182 is a binding site for ATP. The short motif at aspartate 285–histidine 288 is the DEAH box element. In terms of domain architecture, Helicase C-terminal spans arginine 492–glycine 663.

Belongs to the SNF2/RAD54 helicase family. RapA subfamily. Interacts with the RNAP. Has a higher affinity for the core RNAP than for the holoenzyme. Its ATPase activity is stimulated by binding to RNAP.

Functionally, transcription regulator that activates transcription by stimulating RNA polymerase (RNAP) recycling in case of stress conditions such as supercoiled DNA or high salt concentrations. Probably acts by releasing the RNAP, when it is trapped or immobilized on tightly supercoiled DNA. Does not activate transcription on linear DNA. Probably not involved in DNA repair. This chain is RNA polymerase-associated protein RapA, found in Actinobacillus pleuropneumoniae serotype 7 (strain AP76).